The primary structure comprises 243 residues: Proteasome subunit alpha (243 aa).

The protein belongs to the peptidase T1A family. In terms of assembly, the 20S proteasome core is composed of 14 alpha and 14 beta subunits that assemble into four stacked heptameric rings, resulting in a barrel-shaped structure. The two inner rings, each composed of seven catalytic beta subunits, are sandwiched by two outer rings, each composed of seven alpha subunits. The catalytic chamber with the active sites is on the inside of the barrel. Has a gated structure, the ends of the cylinder being occluded by the N-termini of the alpha-subunits. Is capped at one or both ends by the proteasome regulatory ATPase, PAN.

The protein resides in the cytoplasm. Its activity is regulated as follows. The formation of the proteasomal ATPase PAN-20S proteasome complex, via the docking of the C-termini of PAN into the intersubunit pockets in the alpha-rings, triggers opening of the gate for substrate entry. Interconversion between the open-gate and close-gate conformations leads to a dynamic regulation of the 20S proteasome proteolysis activity. Functionally, component of the proteasome core, a large protease complex with broad specificity involved in protein degradation. The chain is Proteasome subunit alpha from Pyrobaculum aerophilum (strain ATCC 51768 / DSM 7523 / JCM 9630 / CIP 104966 / NBRC 100827 / IM2).